Consider the following 251-residue polypeptide: MGQKVNPTGFRLGIIRDWTSRWYDDSPVIAEKLKQDHVIRNYVQARLKRERAGIAKIVIERTTKHIKINIFAARPGAVVGRKGEEINNLSQELSRITGREVKIDVIEVIKPEIEAQLIGENIAYQLENRVSFRRAMKQAIQQAMRAGAEGIRIRCAGRLGGVEIARSEQYKEGKIPLHTLRANVDYASVTAHTIAGAIGIKVWVYKGEVLVQRIDAIEEDELKKIKDRRGEQRSRGRDSRNRRRRKPRQTT.

Positions 39–109 constitute a KH type-2 domain; that stretch reads IRNYVQARLK…EVKIDVIEVI (71 aa). The span at 222–239 shows a compositional bias: basic and acidic residues; that stretch reads LKKIKDRRGEQRSRGRDS. The tract at residues 222–251 is disordered; that stretch reads LKKIKDRRGEQRSRGRDSRNRRRRKPRQTT. Residues 240-251 show a composition bias toward basic residues; sequence RNRRRRKPRQTT.

The protein belongs to the universal ribosomal protein uS3 family. As to quaternary structure, part of the 30S ribosomal subunit. Forms a tight complex with proteins S10 and S14.

In terms of biological role, binds the lower part of the 30S subunit head. Binds mRNA in the 70S ribosome, positioning it for translation. The protein is Small ribosomal subunit protein uS3 of Prosthecochloris aestuarii (strain DSM 271 / SK 413).